Consider the following 365-residue polypeptide: Delta(7)-sterol 5(6)-desaturase ERG3 (365 aa).

At 1-92 the chain is on the cytoplasmic side; sequence MDLVLEVADH…LLPRSSILRE (92 aa). A helical membrane pass occupies residues 93–113; sequence FLSLWVIVTIFGLLLYLFTAS. The Lumenal portion of the chain corresponds to 114–140; that stretch reads LSYVFVFDKSIFNHPRYLKNQMAMEIK. The chain crosses the membrane as a helical span at residues 141 to 161; that stretch reads LAVSAIPWMSMLTVPWFVMEL. Topologically, residues 162–242 are cytoplasmic; that stretch reads NGHSKLYMKI…VDGFLQSISY (81 aa). The 125-residue stretch at 187-311 folds into the Fatty acid hydroxylase domain; the sequence is TFIFFTDCGV…FTTLWDRLGG (125 aa). A Histidine box-1 motif is present at residues 200 to 204; sequence HRWLH. The short motif at 213-217 is the Histidine box-2 element; the sequence is HKPHH. A helical transmembrane segment spans residues 243 to 263; it reads HIYPLILPLHKVSYLILFTFV. Over 264–365 the chain is Lumenal; sequence NFWTVMIHDG…ENDPNTKKNN (102 aa). Residues 288–292 carry the Histidine box-3 motif; it reads HTVHH. Glycyl lysine isopeptide (Lys-Gly) (interchain with G-Cter in ubiquitin) cross-links involve residues Lys324 and Lys344.

The protein belongs to the sterol desaturase family. In terms of assembly, interacts with ERG28. The cofactor is Fe cation.

The protein localises to the endoplasmic reticulum membrane. The catalysed reaction is episterol + 2 Fe(II)-[cytochrome b5] + O2 + 2 H(+) = 5-dehydroepisterol + 2 Fe(III)-[cytochrome b5] + 2 H2O. It participates in steroid metabolism; ergosterol biosynthesis; ergosterol from zymosterol: step 3/5. C-5 sterol desaturase; part of the third module of ergosterol biosynthesis pathway that includes the late steps of the pathway. ERG3 catalyzes the introduction of a C-5 double bond in the B ring to produce 5-dehydroepisterol. The third module or late pathway involves the ergosterol synthesis itself through consecutive reactions that mainly occur in the endoplasmic reticulum (ER) membrane. Firstly, the squalene synthase ERG9 catalyzes the condensation of 2 farnesyl pyrophosphate moieties to form squalene, which is the precursor of all steroids. Squalene synthase is crucial for balancing the incorporation of farnesyl diphosphate (FPP) into sterol and nonsterol isoprene synthesis. Secondly, the squalene epoxidase ERG1 catalyzes the stereospecific oxidation of squalene to (S)-2,3-epoxysqualene, which is considered to be a rate-limiting enzyme in steroid biosynthesis. Then, the lanosterol synthase ERG7 catalyzes the cyclization of (S)-2,3 oxidosqualene to lanosterol, a reaction that forms the sterol core. In the next steps, lanosterol is transformed to zymosterol through a complex process involving various demethylation, reduction and desaturation reactions. The lanosterol 14-alpha-demethylase ERG11 (also known as CYP51) catalyzes C14-demethylation of lanosterol to produce 4,4'-dimethyl cholesta-8,14,24-triene-3-beta-ol, which is critical for ergosterol biosynthesis. The C-14 reductase ERG24 reduces the C14=C15 double bond of 4,4-dimethyl-cholesta-8,14,24-trienol to produce 4,4-dimethyl-cholesta-8,24-dienol. 4,4-dimethyl-cholesta-8,24-dienol is substrate of the C-4 demethylation complex ERG25-ERG26-ERG27 in which ERG25 catalyzes the three-step monooxygenation required for the demethylation of 4,4-dimethyl and 4alpha-methylsterols, ERG26 catalyzes the oxidative decarboxylation that results in a reduction of the 3-beta-hydroxy group at the C-3 carbon to an oxo group, and ERG27 is responsible for the reduction of the keto group on the C-3. ERG28 has a role as a scaffold to help anchor ERG25, ERG26 and ERG27 to the endoplasmic reticulum and ERG29 regulates the activity of the iron-containing C4-methylsterol oxidase ERG25. Then, the sterol 24-C-methyltransferase ERG6 catalyzes the methyl transfer from S-adenosyl-methionine to the C-24 of zymosterol to form fecosterol. The C-8 sterol isomerase ERG2 catalyzes the reaction which results in unsaturation at C-7 in the B ring of sterols and thus converts fecosterol to episterol. The sterol-C5-desaturase ERG3 then catalyzes the introduction of a C-5 double bond in the B ring to produce 5-dehydroepisterol. The C-22 sterol desaturase ERG5 further converts 5-dehydroepisterol into ergosta-5,7,22,24(28)-tetraen-3beta-ol by forming the C-22(23) double bond in the sterol side chain. Finally, ergosta-5,7,22,24(28)-tetraen-3beta-ol is substrate of the C-24(28) sterol reductase ERG4 to produce ergosterol. This chain is Delta(7)-sterol 5(6)-desaturase ERG3, found in Saccharomyces cerevisiae (strain ATCC 204508 / S288c) (Baker's yeast).